The sequence spans 272 residues: Shikimate dehydrogenase (NADP(+)) (272 aa).

Shikimate contacts are provided by residues 14–16 and threonine 61; that span reads SKS. Lysine 65 (proton acceptor) is an active-site residue. Glutamate 77 contributes to the NADP(+) binding site. Residues asparagine 86 and aspartate 102 each coordinate shikimate. NADP(+) contacts are provided by residues 126-130, 149-154, and methionine 213; these read GAGGA and NRTVSR. Tyrosine 215 contributes to the shikimate binding site. Glycine 237 is an NADP(+) binding site.

The protein belongs to the shikimate dehydrogenase family. In terms of assembly, homodimer.

It carries out the reaction shikimate + NADP(+) = 3-dehydroshikimate + NADPH + H(+). Its pathway is metabolic intermediate biosynthesis; chorismate biosynthesis; chorismate from D-erythrose 4-phosphate and phosphoenolpyruvate: step 4/7. In terms of biological role, involved in the biosynthesis of the chorismate, which leads to the biosynthesis of aromatic amino acids. Catalyzes the reversible NADPH linked reduction of 3-dehydroshikimate (DHSA) to yield shikimate (SA). This is Shikimate dehydrogenase (NADP(+)) from Escherichia coli (strain SMS-3-5 / SECEC).